We begin with the raw amino-acid sequence, 555 residues long: Glutamine--tRNA ligase (555 aa).

The short motif at 34-44 (PEPNGYLHIGH) is the 'HIGH' region element. Residues 35 to 37 (EPN) and 41 to 47 (HIGHAKS) contribute to the ATP site. Residues Asp-67 and Tyr-212 each coordinate L-glutamine. Residues Thr-231, 261 to 262 (RL), and 269 to 271 (MSK) each bind ATP. A 'KMSKS' region motif is present at residues 268–272 (VMSKR). Positions 317–324 (TKQDNTIE) are interaction with tRNA.

This sequence belongs to the class-I aminoacyl-tRNA synthetase family. As to quaternary structure, monomer.

It is found in the cytoplasm. The catalysed reaction is tRNA(Gln) + L-glutamine + ATP = L-glutaminyl-tRNA(Gln) + AMP + diphosphate. In Citrobacter koseri (strain ATCC BAA-895 / CDC 4225-83 / SGSC4696), this protein is Glutamine--tRNA ligase.